Reading from the N-terminus, the 1478-residue chain is FYVE and coiled-coil domain-containing protein 1 (1478 aa).

Alanine 2 is modified (N-acetylalanine). Residues 4–33 (TNAESQLQRIIRDLQDAVTELSKEFQEAGE) adopt a coiled-coil conformation. The 134-residue stretch at 36-169 (TDDSTSLHKF…VQFDLASRGF (134 aa)) folds into the RUN domain. Serine 196 carries the post-translational modification Phosphoserine. Residues 225–280 (NNEALEGFDEMRLELDQLEVREKQLRERMQQLDRENQELRAAVSQQGEQLQTERER) adopt a coiled-coil conformation. Serine 342 is modified (phosphoserine). Position 381 is a phosphothreonine (threonine 381). Coiled-coil stretches lie at residues 394 to 555 (SDAA…MLER) and 596 to 1151 (QEAQ…KDAL). Positions 586-613 (GKPEEEQRGLQEAQLDDTKVQEGSQEEE) are disordered. At serine 878 the chain carries Phosphoserine. The FYVE-type zinc finger occupies 1173 to 1231 (DTEANHCLDCKREFSWMVRRHHCRICGRIFCYYCCNNYVLSKHGGKKERCCRACFQKLS). 8 residues coordinate Zn(2+): cysteine 1179, cysteine 1182, cysteine 1195, cysteine 1198, cysteine 1203, cysteine 1206, cysteine 1223, and cysteine 1226. The span at 1231 to 1261 (SEGPGSPDSSGSGTSQGEPSPALSPASPGPQ) shows a compositional bias: low complexity. Disordered stretches follow at residues 1231-1277 (SEGP…PPDD) and 1294-1332 (SGSS…DMPV). 2 stretches are compositionally biased toward polar residues: residues 1294–1305 (SGSSLPETPTET) and 1314–1324 (EQDTTSTSLTP). The region spanning 1337–1466 (EICLLKSGEL…SKKVFYHLTV (130 aa)) is the GOLD domain.

In terms of assembly, can form homodimers. Interacts (via C-terminus) with MAP1LC3B. Interacts with RAB7A; the interaction with RAB7A induces FYCO1 recruitment to late endosomal/lysosomal compartments. Interacts with MAP1LC3B. In terms of tissue distribution, expressed in heart and skeletal muscle.

Its subcellular location is the cytoplasmic vesicle. The protein resides in the autophagosome. It localises to the endosome. It is found in the lysosome. Its function is as follows. May mediate microtubule plus end-directed vesicle transport. This Homo sapiens (Human) protein is FYVE and coiled-coil domain-containing protein 1 (FYCO1).